Consider the following 346-residue polypeptide: DNA-directed RNA polymerases I and III subunit RPAC1 (346 aa).

Ala2 carries the N-acetylalanine modification.

This sequence belongs to the archaeal Rpo3/eukaryotic RPB3 RNA polymerase subunit family. In terms of assembly, component of the RNA polymerase I and RNA polymerase III complexes consisting of at least 13 and 17 subunits, respectively. Pol I complex consists of a ten-subunit catalytic core composed of POLR1A/RPA1, POLR1B/RPA2, POLR1C/RPAC1, POLR1D/RPAC2, POLR1H/RPA12, POLR2E/RPABC1, POLR2F/RPABC2, POLR2H/RPABC3, POLR2K/RPABC4 and POLR2L/RPABC5; a mobile stalk subunit POLR1F/RPA43 protruding from the core and additional subunits homologous to general transcription factors POLR1E/RPA49 and POLR1G/RPA34. Part of Pol I pre-initiation complex (PIC), in which Pol I core assembles with RRN3 and promoter-bound UTBF and SL1/TIF-IB complex. Pol III complex consists of a ten-subunit catalytic core composed of POLR3A/RPC1, POLR3B/RPC2, POLR1C/RPAC1, POLR1D/RPAC2, POLR3K/RPC10, POLR2E/RPABC1, POLR2F/RPABC2, POLR2H/RPABC3, POLR2K/RPABC4 and POLR2L/RPABC5; a mobile stalk composed of two subunits POLR3H/RPC8 and CRCP/RPC9, protruding from the core and functioning primarily in transcription initiation; and additional subunits homologous to general transcription factors of the RNA polymerase II machinery, POLR3C/RPC3-POLR3F/RPC6-POLR3G/RPC7 heterotrimer required for transcription initiation and POLR3D/RPC4-POLR3E/RPC5 heterodimer involved in both transcription initiation and termination.

It localises to the nucleus. It is found in the cytoplasm. The protein resides in the cytosol. Its function is as follows. DNA-dependent RNA polymerase catalyzes the transcription of DNA into RNA using the four ribonucleoside triphosphates as substrates. Common component of RNA polymerases I and III which synthesize ribosomal RNA precursors and short non-coding RNAs including 5S rRNA, snRNAs, tRNAs and miRNAs, respectively. POLR1C/RPAC1 is part of the polymerase core and may function as a clamp element that moves to open and close the cleft. In Bos taurus (Bovine), this protein is DNA-directed RNA polymerases I and III subunit RPAC1 (POLR1C).